The following is a 103-amino-acid chain: Large ribosomal subunit protein bL21 (103 aa).

This sequence belongs to the bacterial ribosomal protein bL21 family. In terms of assembly, part of the 50S ribosomal subunit. Contacts protein L20.

This protein binds to 23S rRNA in the presence of protein L20. The polypeptide is Large ribosomal subunit protein bL21 (Chromobacterium violaceum (strain ATCC 12472 / DSM 30191 / JCM 1249 / CCUG 213 / NBRC 12614 / NCIMB 9131 / NCTC 9757 / MK)).